The primary structure comprises 1055 residues: MTVEQNVLQQSAAQKHQQTFLNQLREITGINDTQILQQALKDSNGNLELAVAFLTAKNAKTPQQEETTYYQTALPGNDRYISVGSQADTNVIDLTGDDKDDLQRAIALSLAESNRAFRETGITDEEQAISRVLEASIAENKACLKRTPTEVWRDSRNPYDRKRQDKAPVGLKNVGNTCWFSAVIQSLFNLLEFRRLVLNYKPPSNAQDLPRNQKEHRNLPFMRELRYLFALLVGTKRKYVDPSRAVEILKDAFKSNDSQQQDVSEFTHKLLDWLEDAFQMKAEEETDEEKPKNPMVELFYGRFLAVGVLEGKKFENTEMFGQYPLQVNGFKDLHECLEAAMIEGEIESLHSENSGKSGQEHWFTELPPVLTFELSRFEFNQALGRPEKIHNKLEFPQVLYLDRYMHRNREITRIKREEIKRLKDYLTVLQQRLERYLSYGSGPKRFPLVDVLQYALEFASSKPVCTSPVDDIDASSPPSGSIPSQTLPSTTEQQGALSSELPSTSPSSVAAISSRSVIHKPFTQSRIPPDLPMHPAPRHITEEELSVLESCLHRWRTEIENDTRDLQESISRIHRTIELMYSDKSMIQVPYRLHAVLVHEGQANAGHYWAYIFDHRESRWMKYNDIAVTKSSWEELVRDSFGGYRNASAYCLMYINDKAQFLIQEEFNKETGQPLVGIETLPPDLRDFVEEDNQRFEKELEEWDAQLAQKALQEKLLASQKLRESETSVTTAQAAGDPEYLEQPSRSDFSKHLKEETIQIITKASHEHEDKSPETVLQSAIKLEYARLVKLAQEDTPPETDYRLHHVVVYFIQNQAPKKIIEKTLLEQFGDRNLSFDERCHNIMKVAQAKLEMIKPEEVNLEEYEEWHQDYRKFRETTMYLIIGLENFQRESYIDSLLFLICAYQNNKELLSKGLYRGHDEELISHYRRECLLKLNEQAAELFESGEDREVNNGLIIMNEFIVPFLPLLLVDEMEEKDILAVEDMRNRWCSYLGQEMEPHLQEKLTDFLPKLLDCSMEIKSFHEPPKLPSYSTHELCERFARIMLSLSRTPADGR.

The region spanning Gln-14–Lys-57 is the UBA-like domain. An SUMO interaction domain (SIM) region spans residues Asn-77–Leu-102. Phosphoserine is present on Ser-85. The short motif at Thr-89–Thr-95 is the Required for SUMO paralog-specific binding element. UIM domains follow at residues Asp-97 to Ala-116 and Thr-123 to Asn-140. Lys-99 participates in a covalent cross-link: Glycyl lysine isopeptide (Lys-Gly) (interchain with G-Cter in SUMO); alternate. A Glycyl lysine isopeptide (Lys-Gly) (interchain with G-Cter in ubiquitin); alternate cross-link involves residue Lys-99. The 489-residue stretch at Val-169 to Asp-657 folds into the USP domain. Cys-178 is an active-site residue. The tract at residues Val-464–Ser-507 is disordered. Residues Ser-476 to Ala-496 are compositionally biased toward polar residues. A compositionally biased stretch (low complexity) spans Leu-497 to Ser-507. A coiled-coil region spans residues Thr-541 to Glu-578. Residues His-599 and His-607 contribute to the active site. A coiled-coil region spans residues Asp-684–Leu-717. The interval Thr-727 to Phe-749 is disordered. The residue at position 740 (Tyr-740) is a Phosphotyrosine.

This sequence belongs to the peptidase C19 family. As to quaternary structure, homotetramer, inhibited form. Homodimer, active form. Interacts with ACTA1 (via its C-terminus); the interaction occurs for all isoforms but is strongest for isoform USP25m in muscle differentiating cells. Interacts (isoform USP25m only) with MYBPC1; the interaction prevents proteasomal degradation of MYBPC1. Interacts (isoform USP25m only) with FLNC (via filament repeats 17-18, 20-21 and 24). Interacts with GAPDH. Interacts with SUMO3; the interaction sumoylates efficiently USP25. Interacts with SUMO2; the interaction sumoylates efficiently USP25. Interacts with SUMO1; the interaction only weakly sumoylates USP25. Interacts with SYK; phosphorylates USP25 and regulates USP25 intracellular levels. In terms of processing, acetylated. Sumoylation impairs binding to and hydrolysis of ubiquitin chains. Sumoylated preferentially with SUMO2 or SUMO3. Desumoylated by SENP1. Polyubiquitinated by SMURF1 by promoting the 'Lys-48'-linkage leading to proteasomal degradation. Post-translationally, preferentially monoubiquitinated but can also be polyubiquitinated. Autodeubiquitinated. Ubiquitination activates the enzymatic activity either by preventing sumoylation or by allowing novel interactions. In terms of processing, phosphorylation in the C-terminal by SYK regulates USP25 cellular levels. Isoform USP25a is found in most adult and fetal tissues; expression is moderately high in testis, pancreas, kidney, skeletal muscle, liver, lung, placenta, heart, but very low in peripheral blood, colon, small intestine, ovary, prostate, thymus and spleen. Expressed in the brain, with high levels in the cerebral cortex. Isoform USP25b is found in all tissues except heart and skeletal muscle. Isoform USP25m is heart and skeletal muscle specific.

The protein localises to the cytoplasm. It is found in the nucleus. It catalyses the reaction Thiol-dependent hydrolysis of ester, thioester, amide, peptide and isopeptide bonds formed by the C-terminal Gly of ubiquitin (a 76-residue protein attached to proteins as an intracellular targeting signal).. Deubiquitinating enzyme that hydrolyzes ubiquitin moieties conjugated to substrates and thus, functions in various biological processes including inflammation and immune response. Modulates the Wnt/beta-catenin pathway by deubiquitinating and stabilizing tankyrases TNKS1 and TNKS2. Regulates KEAP1-NRF2 axis in the defense against oxidative assaults by deubiquitinating KEAP1 and protecting it from degradation leading to degradation of the NRF2 transcription factor that is responsible for mounting an anti-oxidation gene expression program. Positively regulates RNA virus-induced innate signaling by interacting with and deubiquitinating ERLIN1 and ERLIN2. In turn, restricts virus production by regulating cholesterol biosynthetic flux. Acts as a negative regulator of interleukin-17-mediated signaling and inflammation through the removal of 'Lys-63'-linked ubiquitination of TRAF5 and TRAF6. Prevents the ubiquitination and degradation of TRAF3 to reduce the phosphorylation levels of JNK and P38, the secretion of IL-1B and to induce endotoxin tolerance. Functionally, the muscle-specific isoform (USP25m) may have a role in the regulation of muscular differentiation and function. This chain is Ubiquitin carboxyl-terminal hydrolase 25 (USP25), found in Homo sapiens (Human).